Consider the following 878-residue polypeptide: Indoleacetate decarboxylase (878 aa).

Residues 42–750 (DRTKRMKERF…VTGATPDGRL (709 aa)) form the PFL domain. Catalysis depends on Cys-500, which acts as the Cysteine radical intermediate. The active-site Proton acceptor is the Glu-502. A Glycine radical domain is found at 758-878 (GILSASPGTD…VIARTEYDAL (121 aa)). Glycine radical is present on Gly-853.

The protein belongs to the glycyl radical enzyme (GRE) family. In terms of assembly, homodimer (predominantly) and monomer. Post-translationally, requires the activating protein OsIADAE to generate the key active site glycyl radical on Gly-853 that is involved in catalysis.

The catalysed reaction is (indol-3-yl)acetate + H(+) = skatole + CO2. The protein operates within amino-acid degradation. Functionally, glycyl radical enzyme that catalyzes the terminal step of tryptophan fermentation, the decarboxylation of indoleacetate to form skatole, a malodorous compound that contributes to the characteristic smell of animal feces. No activity is detected with phenylacetate or p-hydroxyphenylacetate as substrates, indicating high substrate specificity. This chain is Indoleacetate decarboxylase, found in Tractidigestivibacter scatoligenes (Olsenella scatoligenes).